A 343-amino-acid polypeptide reads, in one-letter code: MDKAKALESALAQIERQFGKGSIMKLGANSPVMEIEATSTGSLGLDIALGIGGLPKGRIIEIYGPESSGKTTLTLHVVAEEQKKGGVCAFVDAEHALDPQYAKKLGVNLDELLISQPDTGEQALEIVDTLVRSGAVNLIVVDSVAALTPKSEIEGDMGDMQMGSQARLMSQAMRKLTASIGRSNCMVIFINQIRMKIGVMFGNPETTTGGNALKFYASVRLDIRRTGAIKDRDNVIGNTTKVKVVKNKVAPPFREVEFDIMYGEGISKTGELVDLGVKAGVVEKSGSWYSYGDERIGQGRENAKAFLRANPTVAGDIEDRIRASHGLDFSTGEDGKGDDLVDM.

64 to 71 contacts ATP; sequence GPESSGKT.

The protein belongs to the RecA family.

It localises to the cytoplasm. In terms of biological role, can catalyze the hydrolysis of ATP in the presence of single-stranded DNA, the ATP-dependent uptake of single-stranded DNA by duplex DNA, and the ATP-dependent hybridization of homologous single-stranded DNAs. It interacts with LexA causing its activation and leading to its autocatalytic cleavage. In Cereibacter sphaeroides (strain ATCC 17023 / DSM 158 / JCM 6121 / CCUG 31486 / LMG 2827 / NBRC 12203 / NCIMB 8253 / ATH 2.4.1.) (Rhodobacter sphaeroides), this protein is Protein RecA.